The following is a 119-amino-acid chain: Protein BEX4 (119 aa).

Residues methionine 1–arginine 53 are disordered. A compositionally biased stretch (low complexity) spans alanine 8–glutamate 20. The tract at residues asparagine 31–isoleucine 89 is interaction with SIRT2. Residues asparagine 31–proline 119 form an interaction with alpha-tubulin region. Cysteine 116 is a binding site for Zn(2+).

This sequence belongs to the BEX family. Interacts with alpha-tubulin. Interacts with SIRT2. Ubiquitinated and degraded by the proteasome.

The protein localises to the cytoplasm. It is found in the cytoskeleton. Its subcellular location is the spindle pole. The protein resides in the nucleus. In terms of biological role, may play a role in microtubule deacetylation by negatively regulating the SIRT2 deacetylase activity toward alpha-tubulin and thereby participate in the control of cell cycle progression and genomic stability. In absence of reductive stress, acts as a pseudosubstrate for the CRL2(FEM1B) complex: associates with FEM1B via zinc, thereby preventing association between FEM1B and its substrates. This Pongo abelii (Sumatran orangutan) protein is Protein BEX4.